A 241-amino-acid chain; its full sequence is 2-C-methyl-D-erythritol 4-phosphate cytidylyltransferase (241 aa).

Belongs to the IspD/TarI cytidylyltransferase family. IspD subfamily. In terms of assembly, homodimer.

It catalyses the reaction 2-C-methyl-D-erythritol 4-phosphate + CTP + H(+) = 4-CDP-2-C-methyl-D-erythritol + diphosphate. It functions in the pathway isoprenoid biosynthesis; isopentenyl diphosphate biosynthesis via DXP pathway; isopentenyl diphosphate from 1-deoxy-D-xylulose 5-phosphate: step 2/6. In terms of biological role, catalyzes the formation of 4-diphosphocytidyl-2-C-methyl-D-erythritol from CTP and 2-C-methyl-D-erythritol 4-phosphate (MEP). The sequence is that of 2-C-methyl-D-erythritol 4-phosphate cytidylyltransferase from Yersinia pseudotuberculosis serotype IB (strain PB1/+).